Reading from the N-terminus, the 524-residue chain is Casein kinase I homolog 3 (524 aa).

The Protein kinase domain maps to 14 to 319; it reads YAVGPKIGEG…YLISLMDDAL (306 aa). Residues 20-28 and K60 each bind ATP; that span reads IGEGSFGVI. The Proton acceptor role is filled by D150. Disordered stretches follow at residues 352–414 and 427–474; these read HGYG…KQQH and PETH…EHNL. The segment covering 360-373 has biased composition (low complexity); sequence RVNGNTARNNVNTN. 2 stretches are compositionally biased toward polar residues: residues 374 to 413 and 429 to 474; these read SKTR…TKQQ and THSN…EHNL. The short motif at 444–447 is the YXXZ targeting signal element; sequence YDSI. Residues C517, C518, C519, C520, C522, C523, and C524 are each lipidated (S-palmitoyl cysteine).

Belongs to the protein kinase superfamily. CK1 Ser/Thr protein kinase family. Casein kinase I subfamily.

Its subcellular location is the cell membrane. The protein resides in the nucleus membrane. It is found in the vacuole membrane. The catalysed reaction is L-seryl-[protein] + ATP = O-phospho-L-seryl-[protein] + ADP + H(+). The enzyme catalyses L-threonyl-[protein] + ATP = O-phospho-L-threonyl-[protein] + ADP + H(+). Functionally, casein kinases are operationally defined by their preferential utilization of acidic proteins such as caseins as substrates. Phosphorylates MON1, inhibiting the guanine nucleotide exchange factor activity of the MON1-CCZ1 complex, possibly by preventing its recruitment to membranes by small GTPase RAB5 homologs. In Saccharomyces cerevisiae (strain ATCC 204508 / S288c) (Baker's yeast), this protein is Casein kinase I homolog 3 (YCK3).